Consider the following 281-residue polypeptide: Undecaprenyl-diphosphatase (281 aa).

Transmembrane regions (helical) follow at residues 90-110, 113-133, 147-167, 191-211, 217-237, and 257-277; these read WLVT…QDSI, VLRG…VLGA, LSWK…IPGV, SFLL…YDEL, IAWV…YAVI, and IAAA…AFQG.

This sequence belongs to the UppP family.

The protein localises to the cell membrane. The enzyme catalyses di-trans,octa-cis-undecaprenyl diphosphate + H2O = di-trans,octa-cis-undecaprenyl phosphate + phosphate + H(+). Catalyzes the dephosphorylation of undecaprenyl diphosphate (UPP). Confers resistance to bacitracin. In Kineococcus radiotolerans (strain ATCC BAA-149 / DSM 14245 / SRS30216), this protein is Undecaprenyl-diphosphatase.